We begin with the raw amino-acid sequence, 561 residues long: Long-chain-fatty-acid--CoA ligase (561 aa).

213–224 lines the ATP pocket; that stretch reads YTGGTTGVAKGA.

The protein belongs to the ATP-dependent AMP-binding enzyme family. It depends on Mg(2+) as a cofactor.

It localises to the membrane. The enzyme catalyses a long-chain fatty acid + ATP + CoA = a long-chain fatty acyl-CoA + AMP + diphosphate. It participates in lipid metabolism; fatty acid beta-oxidation. Its function is as follows. Catalyzes the esterification, concomitant with transport, of exogenous long-chain fatty acids into metabolically active CoA thioesters for subsequent degradation or incorporation into phospholipids. The polypeptide is Long-chain-fatty-acid--CoA ligase (fadD) (Escherichia coli O6:H1 (strain CFT073 / ATCC 700928 / UPEC)).